The primary structure comprises 564 residues: MFS-type transporter grgE (564 aa).

A compositionally biased stretch (basic and acidic residues) spans 1 to 10; sequence MAENQVDPKR. A disordered region spans residues 1–52; the sequence is MAENQVDPKRNLPLYGAADESTSATDKEDEVENVRQNGSAPPIEEARESNEA. The N-linked (GlcNAc...) asparagine glycan is linked to asparagine 37. 7 consecutive transmembrane segments (helical) span residues 60-80, 101-118, 131-151, 161-181, 192-212, 220-240, and 262-282; these read HGLSLFFIVLAIMLATFIISL, KVSWYGSAYFMTFGGFQT, TTFLVSLFIFEIGSLICGVAP, AIAGLGGAGMATGGFTIIAFS, GLVGSAYGLSAVAGPLIGGAF, WCFYINLPVGGLAAVIILIFF, and LVGVSLLMCLIICFILALQYG. Asparagine 289 carries N-linked (GlcNAc...) asparagine glycosylation. A run of 7 helical transmembrane segments spans residues 293–313, 329–349, 368–388, 392–412, 425–445, 462–482, and 531–551; these read VIGLLVGFVAILVALIIWEYY, ALWAPSTYMFFFAGSYFILLY, VRNLPMVVTFSIAAILAGAFV, GIATPVMLVGAAIATIGTGLI, IGYQILAAFGFVIPWLIPMNI, IFLAQTLGGAFSVSAAQSAFV, and TFAISVGMVGFACLMGLFTPW.

It belongs to the major facilitator superfamily.

The protein resides in the membrane. Its function is as follows. MFS-type transporter; part of the gene cluster that mediates the biosynthesis of gregatin A, a fungal polyketide featuring an alkylated furanone core. This is MFS-type transporter grgE from Penicillium sp.